Here is a 286-residue protein sequence, read N- to C-terminus: Octanoyltransferase (286 aa).

In terms of domain architecture, BPL/LPL catalytic spans 50-278; the sequence is LRTPDELWIV…NIAQRHAGVI (229 aa). Residues 89 to 96, 190 to 192, and 203 to 205 each bind substrate; these read RGGQVTWH, SLG, and GVA. C221 serves as the catalytic Acyl-thioester intermediate.

The protein belongs to the LipB family.

It is found in the cytoplasm. It catalyses the reaction octanoyl-[ACP] + L-lysyl-[protein] = N(6)-octanoyl-L-lysyl-[protein] + holo-[ACP] + H(+). It functions in the pathway protein modification; protein lipoylation via endogenous pathway; protein N(6)-(lipoyl)lysine from octanoyl-[acyl-carrier-protein]: step 1/2. Catalyzes the transfer of endogenously produced octanoic acid from octanoyl-acyl-carrier-protein onto the lipoyl domains of lipoate-dependent enzymes. Lipoyl-ACP can also act as a substrate although octanoyl-ACP is likely to be the physiological substrate. In Psychrobacter arcticus (strain DSM 17307 / VKM B-2377 / 273-4), this protein is Octanoyltransferase.